The following is a 632-amino-acid chain: 2-hydroxyacyl-CoA lyase 2 (632 aa).

Residues 13–33 (FFPSFLLLAFGTLVAAVLGVA) form a helical membrane-spanning segment. Residue glutamate 98 coordinates thiamine diphosphate. At serine 369 the chain carries Phosphoserine. The tract at residues 470–550 (DFVATAAYLV…VIALVGNDAG (81 aa)) is thiamine pyrophosphate binding. Aspartate 521 and asparagine 547 together coordinate Mg(2+).

Belongs to the TPP enzyme family. It depends on Mg(2+) as a cofactor. Thiamine diphosphate serves as cofactor.

It localises to the endoplasmic reticulum membrane. It catalyses the reaction 2-hydroxyoctadecanoyl-CoA = heptadecanal + formyl-CoA. The catalysed reaction is (2R)-hydroxyhexadecanoyl-CoA = pentadecanal + formyl-CoA. In terms of biological role, endoplasmic reticulum 2-OH acyl-CoA lyase involved in the cleavage (C1 removal) reaction in the fatty acid alpha-oxydation in a thiamine pyrophosphate (TPP)-dependent manner. Involved in the phytosphingosine degradation pathway. This chain is 2-hydroxyacyl-CoA lyase 2 (Ilvbl), found in Mus musculus (Mouse).